The following is a 591-amino-acid chain: CTP synthase 1-A (591 aa).

Positions 300–554 (SIALVGKYTK…LASVGRLSQY (255 aa)) constitute a Glutamine amidotransferase type-1 domain. Active-site for GATase activity residues include cysteine 399, histidine 526, and glutamate 528.

This sequence belongs to the CTP synthase family.

It catalyses the reaction UTP + L-glutamine + ATP + H2O = CTP + L-glutamate + ADP + phosphate + 2 H(+). Its pathway is pyrimidine metabolism; CTP biosynthesis via de novo pathway; CTP from UDP: step 2/2. This enzyme is involved in the de novo synthesis of CTP, a precursor of DNA, RNA and phospholipids. Catalyzes the ATP-dependent amination of UTP to CTP with either L-glutamine or ammonia as a source of nitrogen. This Xenopus laevis (African clawed frog) protein is CTP synthase 1-A (ctps1-a).